A 324-amino-acid chain; its full sequence is DNA-directed RNA polymerase subunit alpha (324 aa).

Residues 1-228 (MIEFQKPTIR…EHFNLFTDLS (228 aa)) are alpha N-terminal domain (alpha-NTD). Positions 245 to 324 (RNKLLDMTIE…STPKEEEEEK (80 aa)) are alpha C-terminal domain (alpha-CTD).

The protein belongs to the RNA polymerase alpha chain family. Homodimer. The RNAP catalytic core consists of 2 alpha, 1 beta, 1 beta' and 1 omega subunit. When a sigma factor is associated with the core the holoenzyme is formed, which can initiate transcription.

It catalyses the reaction RNA(n) + a ribonucleoside 5'-triphosphate = RNA(n+1) + diphosphate. Its function is as follows. DNA-dependent RNA polymerase catalyzes the transcription of DNA into RNA using the four ribonucleoside triphosphates as substrates. The protein is DNA-directed RNA polymerase subunit alpha of Caldicellulosiruptor bescii (strain ATCC BAA-1888 / DSM 6725 / KCTC 15123 / Z-1320) (Anaerocellum thermophilum).